The following is a 292-amino-acid chain: Fat storage-inducing transmembrane protein 1 (292 aa).

Over 1 to 18 the chain is Lumenal; the sequence is MERGPVVGAGRGAGARIR. Residues 19 to 39 form a helical membrane-spanning segment; that stretch reads ALLGGLVRVLLWVASALLYFG. Over 40 to 54 the chain is Cytoplasmic; the sequence is SEQAARLLGSPCLRR. The chain crosses the membrane as a helical span at residues 55 to 75; the sequence is LYHAWLAAVVIFGPLLQFHVN. Topologically, residues 76-94 are lumenal; sequence PRTIFASHGNFFNIKFVNS. The helical transmembrane segment at 95 to 115 threads the bilayer; that stretch reads AWGWTCTFLGGFVLLVVFLAT. Residues 116–141 are Cytoplasmic-facing; the sequence is RRVAVTARHLSRLVVGAAVWRGAGRA. The chain crosses the membrane as a helical span at residues 142-162; the sequence is FLLIEDLTGSCFEPLPQGLLL. Residues 163 to 187 are Lumenal-facing; the sequence is HELPDRRSCLAAGHQWRGYTVSSHT. Residue H186 is part of the active site. The chain crosses the membrane as a helical span at residues 188 to 208; sequence FLLTFCCLLMAEEAAVFAKYL. Residues 209-220 lie on the Cytoplasmic side of the membrane; sequence AHGLPAGAPLRL. A helical membrane pass occupies residues 221–241; the sequence is VFLLNVLLLGLWNFLLLCTVI. At 242–249 the chain is on the lumenal side; it reads YFHQYTHK. H244 is a catalytic residue. Residues 250–270 traverse the membrane as a helical segment; it reads VVGAAVGTFAWYLTYGSWYHQ. Over 271–292 the chain is Cytoplasmic; the sequence is PWSPGSPGHGLFPRPHSIHKHN.

The protein belongs to the FIT family. FIT1 subfamily.

It is found in the endoplasmic reticulum membrane. Its function is as follows. Plays an important role in the formation of lipid droplets (LDs) which are storage organelles at the center of lipid and energy homeostasis. Directly binds to diacylglycerol (DAGs) and triacylglycerol. This chain is Fat storage-inducing transmembrane protein 1, found in Bos taurus (Bovine).